Reading from the N-terminus, the 282-residue chain is Probable endonuclease 4 (282 aa).

H69, H109, E145, D179, H182, H216, D229, H231, and E261 together coordinate Zn(2+).

The protein belongs to the AP endonuclease 2 family. It depends on Zn(2+) as a cofactor.

The catalysed reaction is Endonucleolytic cleavage to 5'-phosphooligonucleotide end-products.. Functionally, endonuclease IV plays a role in DNA repair. It cleaves phosphodiester bonds at apurinic or apyrimidinic (AP) sites, generating a 3'-hydroxyl group and a 5'-terminal sugar phosphate. In Edwardsiella ictaluri (strain 93-146), this protein is Probable endonuclease 4.